We begin with the raw amino-acid sequence, 182 residues long: Adenine phosphoribosyltransferase (182 aa).

Belongs to the purine/pyrimidine phosphoribosyltransferase family. Homodimer.

The protein localises to the cytoplasm. It carries out the reaction AMP + diphosphate = 5-phospho-alpha-D-ribose 1-diphosphate + adenine. It functions in the pathway purine metabolism; AMP biosynthesis via salvage pathway; AMP from adenine: step 1/1. Catalyzes a salvage reaction resulting in the formation of AMP, that is energically less costly than de novo synthesis. The sequence is that of Adenine phosphoribosyltransferase from Pseudomonas syringae pv. syringae (strain B728a).